A 197-amino-acid chain; its full sequence is Probable GTP-binding protein EngB (197 aa).

Residues 22 to 195 form the EngB-type G domain; the sequence is KRIEIAFVGR…LKVLESVIDF (174 aa). GTP is bound by residues 30–37, 57–61, 75–78, 142–145, and 174–176; these read GRSNVGKS, GKTRL, DLPG, TKVD, and FSS. The Mg(2+) site is built by Ser-37 and Thr-59.

Belongs to the TRAFAC class TrmE-Era-EngA-EngB-Septin-like GTPase superfamily. EngB GTPase family. The cofactor is Mg(2+).

Necessary for normal cell division and for the maintenance of normal septation. The protein is Probable GTP-binding protein EngB of Clostridium kluyveri (strain ATCC 8527 / DSM 555 / NBRC 12016 / NCIMB 10680 / K1).